The sequence spans 368 residues: RNA polymerase sigma factor SigA (368 aa).

Residues 60 to 86 (VVDENGDPSEHSLKKDEKEAEKAQAED) form a disordered region. Basic and acidic residues predominate over residues 67 to 84 (PSEHSLKKDEKEAEKAQA). The sigma-70 factor domain-2 stretch occupies residues 135–205 (LAEANLRLVV…TRAIADQART (71 aa)). An Interaction with polymerase core subunit RpoC motif is present at residues 159–162 (DLIQ). A sigma-70 factor domain-3 region spans residues 214–290 (ETINKLIRIQ…DQDATSPAEH (77 aa)). The sigma-70 factor domain-4 stretch occupies residues 303–356 (VLDTLTDREENVLRLRFGLDDGRTRTLEEVGKVFGVTRERIRQIEAKALRKLRH). The segment at residues 329–348 (LEEVGKVFGVTRERIRQIEA) is a DNA-binding region (H-T-H motif).

Belongs to the sigma-70 factor family. RpoD/SigA subfamily. As to quaternary structure, interacts transiently with the RNA polymerase catalytic core.

It localises to the cytoplasm. Its function is as follows. Sigma factors are initiation factors that promote the attachment of RNA polymerase to specific initiation sites and are then released. This sigma factor is the primary sigma factor during exponential growth. The protein is RNA polymerase sigma factor SigA of Enterococcus faecalis (strain ATCC 700802 / V583).